Consider the following 296-residue polypeptide: Transcription factor bHLH99 (296 aa).

Residues 99–150 (NQRMNHIAVERNRRKQMNHFLSILKSMMPLSYSQPNDQASIIEGTISYLKKL) enclose the bHLH domain.

As to quaternary structure, homodimer. In terms of tissue distribution, expressed constitutively in roots, stems, and flowers.

Its subcellular location is the nucleus. This chain is Transcription factor bHLH99 (BHLH99), found in Arabidopsis thaliana (Mouse-ear cress).